The primary structure comprises 1316 residues: DNA-directed RNA polymerase subunit beta' (1316 aa).

Residues cysteine 60, cysteine 62, cysteine 75, and cysteine 78 each coordinate Zn(2+). Positions 535, 537, and 539 each coordinate Mg(2+). Residues cysteine 891, cysteine 968, cysteine 975, and cysteine 978 each contribute to the Zn(2+) site.

This sequence belongs to the RNA polymerase beta' chain family. In terms of assembly, the RNAP catalytic core consists of 2 alpha, 1 beta, 1 beta' and 1 omega subunit. When a sigma factor is associated with the core the holoenzyme is formed, which can initiate transcription. Mg(2+) serves as cofactor. Zn(2+) is required as a cofactor.

It catalyses the reaction RNA(n) + a ribonucleoside 5'-triphosphate = RNA(n+1) + diphosphate. DNA-dependent RNA polymerase catalyzes the transcription of DNA into RNA using the four ribonucleoside triphosphates as substrates. This Mycobacterium bovis (strain BCG / Tokyo 172 / ATCC 35737 / TMC 1019) protein is DNA-directed RNA polymerase subunit beta'.